The chain runs to 526 residues: Acetyl-CoA hydrolase (526 aa).

277-281 lines the CoA pocket; it reads GIGNI. Glu-302 (5-glutamyl coenzyme A thioester intermediate) is an active-site residue. CoA-binding residues include Asn-392 and Gly-396.

Belongs to the acetyl-CoA hydrolase/transferase family.

Its subcellular location is the cytoplasm. It catalyses the reaction acetyl-CoA + H2O = acetate + CoA + H(+). Functionally, presumably involved in regulating the intracellular acetyl-CoA pool for fatty acid and cholesterol synthesis and fatty acid oxidation. The chain is Acetyl-CoA hydrolase (ACH1) from Candida glabrata (strain ATCC 2001 / BCRC 20586 / JCM 3761 / NBRC 0622 / NRRL Y-65 / CBS 138) (Yeast).